The sequence spans 278 residues: 4-diphosphocytidyl-2-C-methyl-D-erythritol kinase (278 aa).

K10 is an active-site residue. 93–103 (PMGGGLGGGSS) contributes to the ATP binding site. The active site involves D135.

Belongs to the GHMP kinase family. IspE subfamily.

The enzyme catalyses 4-CDP-2-C-methyl-D-erythritol + ATP = 4-CDP-2-C-methyl-D-erythritol 2-phosphate + ADP + H(+). Its pathway is isoprenoid biosynthesis; isopentenyl diphosphate biosynthesis via DXP pathway; isopentenyl diphosphate from 1-deoxy-D-xylulose 5-phosphate: step 3/6. In terms of biological role, catalyzes the phosphorylation of the position 2 hydroxy group of 4-diphosphocytidyl-2C-methyl-D-erythritol. This Thiobacillus denitrificans (strain ATCC 25259 / T1) protein is 4-diphosphocytidyl-2-C-methyl-D-erythritol kinase.